A 162-amino-acid chain; its full sequence is Cytochrome c-type biogenesis protein CcmE (162 aa).

Over 1-8 (MNPVRKKR) the chain is Cytoplasmic. The chain crosses the membrane as a helical; Signal-anchor for type II membrane protein span at residues 9–29 (LIIVLAIVVGVGAAVGLALSA). The Periplasmic portion of the chain corresponds to 30–162 (LQQNINLFYT…GETSYNQEGK (133 aa)). Heme-binding residues include histidine 124 and tyrosine 128. Residues 139-148 (DSGQLKHYEN) show a composition bias toward basic and acidic residues. Residues 139-162 (DSGQLKHYENGKAAGETSYNQEGK) are disordered.

It belongs to the CcmE/CycJ family.

Its subcellular location is the cell inner membrane. Heme chaperone required for the biogenesis of c-type cytochromes. Transiently binds heme delivered by CcmC and transfers the heme to apo-cytochromes in a process facilitated by CcmF and CcmH. The protein is Cytochrome c-type biogenesis protein CcmE of Pseudomonas aeruginosa (strain LESB58).